Consider the following 277-residue polypeptide: 3-methyl-2-oxobutanoate hydroxymethyltransferase (277 aa).

Mg(2+)-binding residues include Asp-42 and Asp-81. 3-methyl-2-oxobutanoate contacts are provided by residues 42–43, Asp-81, and Lys-110; that span reads DS. Position 112 (Glu-112) interacts with Mg(2+). Catalysis depends on Glu-179, which acts as the Proton acceptor.

The protein belongs to the PanB family. As to quaternary structure, homodecamer; pentamer of dimers. The cofactor is Mg(2+).

It localises to the cytoplasm. The enzyme catalyses 3-methyl-2-oxobutanoate + (6R)-5,10-methylene-5,6,7,8-tetrahydrofolate + H2O = 2-dehydropantoate + (6S)-5,6,7,8-tetrahydrofolate. It participates in cofactor biosynthesis; (R)-pantothenate biosynthesis; (R)-pantoate from 3-methyl-2-oxobutanoate: step 1/2. Functionally, catalyzes the reversible reaction in which hydroxymethyl group from 5,10-methylenetetrahydrofolate is transferred onto alpha-ketoisovalerate to form ketopantoate. This is 3-methyl-2-oxobutanoate hydroxymethyltransferase from Anaplasma marginale (strain St. Maries).